Consider the following 183-residue polypeptide: uncharacterized protein (183 aa).

Belongs to the herpesviridae US1 family.

This is an uncharacterized protein from Human cytomegalovirus (strain AD169) (HHV-5).